The primary structure comprises 275 residues: WIMGHMVNEIYQIDEFVDLGANSIETDITFDDDAMAEYSYHGVPCDCMRWCHKWEYVNDFLEGLRRATTPGDSKYRKQLILVVFDLKTGDLSSSTAYKGGKLFAEKLLRYYWNGGSNGGRAYIIISIPDIDHYAFISGFRDALKKSGHEDLLAKVGYDFSGNDDLNSIRSALHKAGVKDREHVWQSGGITNCLLRSLDRVNEAVKNRDSSNGYISKMYYWTIEKYATGRDALNAEVDGIMTNYPDVIVNVLNEDSFKNRFRMATFDDNPWELFKR.

Histidine 5 is an active-site residue. Positions 25 and 27 each coordinate Mg(2+). Histidine 41 (nucleophile) is an active-site residue. 2 disulfide bridges follow: cysteine 45-cysteine 51 and cysteine 47-cysteine 192. Aspartate 85 provides a ligand contact to Mg(2+).

It belongs to the arthropod phospholipase D family. Class II subfamily. Requires Mg(2+) as cofactor. Expressed by the venom gland.

It localises to the secreted. The enzyme catalyses an N-(acyl)-sphingosylphosphocholine = an N-(acyl)-sphingosyl-1,3-cyclic phosphate + choline. The catalysed reaction is an N-(acyl)-sphingosylphosphoethanolamine = an N-(acyl)-sphingosyl-1,3-cyclic phosphate + ethanolamine. It carries out the reaction a 1-acyl-sn-glycero-3-phosphocholine = a 1-acyl-sn-glycero-2,3-cyclic phosphate + choline. It catalyses the reaction a 1-acyl-sn-glycero-3-phosphoethanolamine = a 1-acyl-sn-glycero-2,3-cyclic phosphate + ethanolamine. Dermonecrotic toxins cleave the phosphodiester linkage between the phosphate and headgroup of certain phospholipids (sphingolipid and lysolipid substrates), forming an alcohol (often choline) and a cyclic phosphate. This toxin acts on sphingomyelin (SM). It may also act on ceramide phosphoethanolamine (CPE), lysophosphatidylcholine (LPC) and lysophosphatidylethanolamine (LPE), but not on lysophosphatidylserine (LPS), and lysophosphatidylglycerol (LPG). It acts by transphosphatidylation, releasing exclusively cyclic phosphate products as second products. Induces dermonecrosis, hemolysis, increased vascular permeability, edema, inflammatory response, and platelet aggregation. The protein is Dermonecrotic toxin LamSicTox-alphaIV1i of Loxosceles amazonica (Recluse spider).